We begin with the raw amino-acid sequence, 412 residues long: Serine hydroxymethyltransferase (412 aa).

Residues leucine 117 and glycine 121–leucine 123 contribute to the (6S)-5,6,7,8-tetrahydrofolate site. Lysine 226 bears the N6-(pyridoxal phosphate)lysine mark.

The protein belongs to the SHMT family. Homodimer. Pyridoxal 5'-phosphate serves as cofactor.

The protein localises to the cytoplasm. It carries out the reaction (6R)-5,10-methylene-5,6,7,8-tetrahydrofolate + glycine + H2O = (6S)-5,6,7,8-tetrahydrofolate + L-serine. The protein operates within one-carbon metabolism; tetrahydrofolate interconversion. Its pathway is amino-acid biosynthesis; glycine biosynthesis; glycine from L-serine: step 1/1. Catalyzes the reversible interconversion of serine and glycine with tetrahydrofolate (THF) serving as the one-carbon carrier. This reaction serves as the major source of one-carbon groups required for the biosynthesis of purines, thymidylate, methionine, and other important biomolecules. Also exhibits THF-independent aldolase activity toward beta-hydroxyamino acids, producing glycine and aldehydes, via a retro-aldol mechanism. The polypeptide is Serine hydroxymethyltransferase (Staphylococcus saprophyticus subsp. saprophyticus (strain ATCC 15305 / DSM 20229 / NCIMB 8711 / NCTC 7292 / S-41)).